A 109-amino-acid polypeptide reads, in one-letter code: Putative double-stranded DNA mimic protein YciU (109 aa).

This sequence belongs to the putative dsDNA mimic protein family.

In terms of biological role, may act as a double-stranded DNA (dsDNA) mimic. Probably regulates the activity of a dsDNA-binding protein. The chain is Putative double-stranded DNA mimic protein YciU from Salmonella paratyphi B (strain ATCC BAA-1250 / SPB7).